The primary structure comprises 376 residues: Alanine racemase (376 aa).

Lys36 (proton acceptor; specific for D-alanine) is an active-site residue. At Lys36 the chain carries N6-(pyridoxal phosphate)lysine. A substrate-binding site is contributed by Arg134. Tyr266 serves as the catalytic Proton acceptor; specific for L-alanine. Met314 serves as a coordination point for substrate.

It belongs to the alanine racemase family. The cofactor is pyridoxal 5'-phosphate.

The catalysed reaction is L-alanine = D-alanine. It functions in the pathway amino-acid biosynthesis; D-alanine biosynthesis; D-alanine from L-alanine: step 1/1. Its function is as follows. Catalyzes the interconversion of L-alanine and D-alanine. May also act on other amino acids. This is Alanine racemase (alr) from Nitratidesulfovibrio vulgaris (strain ATCC 29579 / DSM 644 / CCUG 34227 / NCIMB 8303 / VKM B-1760 / Hildenborough) (Desulfovibrio vulgaris).